The sequence spans 82 residues: MSDTIRTLQGRVLSDKMDKSITVAIERKVKHPLYGKFIKRTTKIHAHDEQNQCNAGDLVTIRECRPLSKTKSWTLVEVISKA.

It belongs to the universal ribosomal protein uS17 family. As to quaternary structure, part of the 30S ribosomal subunit.

In terms of biological role, one of the primary rRNA binding proteins, it binds specifically to the 5'-end of 16S ribosomal RNA. The chain is Small ribosomal subunit protein uS17 from Shewanella halifaxensis (strain HAW-EB4).